We begin with the raw amino-acid sequence, 783 residues long: Serine/threonine-protein kinase SIK1 (783 aa).

The Protein kinase domain occupies 27–278; sequence YDIERTLGKG…IAQIRQHRWM (252 aa). ATP is bound by residues 33–41 and Lys56; that span reads LGKGNFAVV. Asp149 acts as the Proton acceptor in catalysis. Residue Thr182 is modified to Phosphothreonine; by LKB1 and GSK3-beta. Ser186 carries the post-translational modification Phosphoserine; by autocatalysis. A UBA domain is found at 303 to 343; that stretch reads DYDEQALGIMQTLGVDRQRTVESLQNSSYNHFAAIYYLLLE. Thr322 carries the post-translational modification Phosphothreonine; by CaMK1. Disordered regions lie at residues 353 to 377 and 449 to 477; these read CARPGPARQPRPRSSDLSGLEVPQE and RQGPGLEEEQDTQESLPSSTGRRHTLAEV. Residue Thr473 is modified to Phosphothreonine; by PKA. The residue at position 575 (Ser575) is a Phosphoserine; by PKA. Positions 583–612 are RK-rich region; required for cAMP responsiveness and nuclear localization; that stretch reads LKAFRQQLRKTTRTKGFLGLNKIKGLARQV. The disordered stretch occupies residues 619–643; the sequence is RASRGGLSPFHAPAQSPGLHGGAAG.

The protein belongs to the protein kinase superfamily. CAMK Ser/Thr protein kinase family. AMPK subfamily. Interacts with ATP1A1. Interacts (when phosphorylated on Thr-182 and Ser-186) with YWHAZ. Interacts (when phosphorylated at Thr-473 and/or Ser-575) with 14-3-3 proteins; the interaction inhibits kinase activity towards TORCs. There is a cooperative effect of the phosphorylation sites in 14-3-3 binding as the interaction is stronger when both Thr-473 and Ser-575 are modified. Mg(2+) is required as a cofactor. Post-translationally, phosphorylated at Thr-182 by STK11/LKB1 in complex with STE20-related adapter-alpha (STRADA) pseudo kinase and CAB39, leading to its activation. Phosphorylation at Thr-182 promotes autophosphorylation at Ser-186, which is required for sustained activity. Autophosphorylation at Ser-186 is maintained by sequential phosphorylation at Thr-182 by GSK3-beta. GSK3-beta cannot initiate phosphorylation at Thr-182, it can only maintain it. Phosphorylation at Ser-575 in response to cAMP signaling promotes translocation to the cytoplasm. Phosphorylation at Thr-322 by CaMK1 following intracellular sodium concentration leads to activation.

It localises to the cytoplasm. It is found in the nucleus. It carries out the reaction L-seryl-[protein] + ATP = O-phospho-L-seryl-[protein] + ADP + H(+). It catalyses the reaction L-threonyl-[protein] + ATP = O-phospho-L-threonyl-[protein] + ADP + H(+). With respect to regulation, activated by phosphorylation on Thr-182. Also activated by phosphorylation on Thr-322 in response to increases in intracellular sodium in parallel with elevations in intracellular calcium through the reversible sodium/calcium exchanger. Inhibited by phosphorylation at Thr-473 and Ser-575, probably by PKA, which triggers interaction with 14-3-3 proteins. Its function is as follows. Serine/threonine-protein kinase involved in various processes such as cell cycle regulation, gluconeogenesis and lipogenesis regulation, muscle growth and differentiation and tumor suppression. Phosphorylates HDAC4, HDAC5, PPME1, SREBF1, CRTC1/TORC1. Inhibits CREB activity by phosphorylating and inhibiting activity of TORCs, the CREB-specific coactivators, like CRTC2/TORC2 and CRTC3/TORC3 in response to cAMP signaling. Acts as a tumor suppressor and plays a key role in p53/TP53-dependent anoikis, a type of apoptosis triggered by cell detachment: required for phosphorylation of p53/TP53 in response to loss of adhesion and is able to suppress metastasis. Part of a sodium-sensing signaling network, probably by mediating phosphorylation of PPME1: following increases in intracellular sodium, SIK1 is activated by CaMK1 and phosphorylates PPME1 subunit of protein phosphatase 2A (PP2A), leading to dephosphorylation of sodium/potassium-transporting ATPase ATP1A1 and subsequent increase activity of ATP1A1. Acts as a regulator of muscle cells by phosphorylating and inhibiting class II histone deacetylases HDAC4 and HDAC5, leading to promote expression of MEF2 target genes in myocytes. Also required during cardiomyogenesis by regulating the exit of cardiomyoblasts from the cell cycle via down-regulation of CDKN1C/p57Kip2. Acts as a regulator of hepatic gluconeogenesis by phosphorylating and repressing the CREB-specific coactivators CRTC1/TORC1 and CRTC2/TORC2, leading to inhibit CREB activity. Also regulates hepatic lipogenesis by phosphorylating and inhibiting SREBF1. In concert with CRTC1/TORC1, regulates the light-induced entrainment of the circadian clock by attenuating PER1 induction; represses CREB-mediated transcription of PER1 by phosphorylating and deactivating CRTC1/TORC1. The protein is Serine/threonine-protein kinase SIK1 (SIK1) of Homo sapiens (Human).